The sequence spans 1126 residues: DNA-directed RNA polymerase subunit Rpo2 (1126 aa).

Positions 1060, 1063, 1078, and 1081 each coordinate Zn(2+).

Belongs to the RNA polymerase beta chain family. In terms of assembly, part of the 13-subunit RNA polymerase complex. Interacts with TFS4. (Microbial infection) Binds viral protein RIP which blocks global transcription. The cofactor is Zn(2+).

It is found in the cytoplasm. The enzyme catalyses RNA(n) + a ribonucleoside 5'-triphosphate = RNA(n+1) + diphosphate. Its function is as follows. DNA-dependent RNA polymerase (RNAP) catalyzes the transcription of DNA into RNA using the four ribonucleoside triphosphates as substrates. This subunit is involved in DNA promoter recognition. In Sulfolobus acidocaldarius (strain ATCC 33909 / DSM 639 / JCM 8929 / NBRC 15157 / NCIMB 11770), this protein is DNA-directed RNA polymerase subunit Rpo2.